A 559-amino-acid polypeptide reads, in one-letter code: Dihydroxy-acid dehydratase (559 aa).

Asp-78 is a Mg(2+) binding site. Cys-119 is a binding site for [2Fe-2S] cluster. The Mg(2+) site is built by Asp-120 and Lys-121. Position 121 is an N6-carboxylysine (Lys-121). Cys-192 provides a ligand contact to [2Fe-2S] cluster. Residue Glu-446 participates in Mg(2+) binding. Ser-472 functions as the Proton acceptor in the catalytic mechanism.

The protein belongs to the IlvD/Edd family. In terms of assembly, homodimer. The cofactor is [2Fe-2S] cluster. Mg(2+) serves as cofactor.

The enzyme catalyses (2R)-2,3-dihydroxy-3-methylbutanoate = 3-methyl-2-oxobutanoate + H2O. It carries out the reaction (2R,3R)-2,3-dihydroxy-3-methylpentanoate = (S)-3-methyl-2-oxopentanoate + H2O. The protein operates within amino-acid biosynthesis; L-isoleucine biosynthesis; L-isoleucine from 2-oxobutanoate: step 3/4. It participates in amino-acid biosynthesis; L-valine biosynthesis; L-valine from pyruvate: step 3/4. In terms of biological role, functions in the biosynthesis of branched-chain amino acids. Catalyzes the dehydration of (2R,3R)-2,3-dihydroxy-3-methylpentanoate (2,3-dihydroxy-3-methylvalerate) into 2-oxo-3-methylpentanoate (2-oxo-3-methylvalerate) and of (2R)-2,3-dihydroxy-3-methylbutanoate (2,3-dihydroxyisovalerate) into 2-oxo-3-methylbutanoate (2-oxoisovalerate), the penultimate precursor to L-isoleucine and L-valine, respectively. The sequence is that of Dihydroxy-acid dehydratase from Wolinella succinogenes (strain ATCC 29543 / DSM 1740 / CCUG 13145 / JCM 31913 / LMG 7466 / NCTC 11488 / FDC 602W) (Vibrio succinogenes).